Consider the following 327-residue polypeptide: Malate dehydrogenase (327 aa).

12-18 (GAAGQIG) is an NAD(+) binding site. Substrate-binding residues include Arg93 and Arg99. NAD(+)-binding positions include Asn106, Gln113, and 130–132 (VGN). Substrate-binding residues include Asn132 and Arg163. His188 acts as the Proton acceptor in catalysis.

This sequence belongs to the LDH/MDH superfamily. MDH type 2 family.

It catalyses the reaction (S)-malate + NAD(+) = oxaloacetate + NADH + H(+). Its function is as follows. Catalyzes the reversible oxidation of malate to oxaloacetate. The sequence is that of Malate dehydrogenase from Cupriavidus pinatubonensis (strain JMP 134 / LMG 1197) (Cupriavidus necator (strain JMP 134)).